Here is a 456-residue protein sequence, read N- to C-terminus: UDP-N-acetylmuramoylalanine--D-glutamate ligase (456 aa).

ATP is bound at residue 121-127 (GTNGKTT).

The protein belongs to the MurCDEF family.

Its subcellular location is the cytoplasm. The enzyme catalyses UDP-N-acetyl-alpha-D-muramoyl-L-alanine + D-glutamate + ATP = UDP-N-acetyl-alpha-D-muramoyl-L-alanyl-D-glutamate + ADP + phosphate + H(+). It participates in cell wall biogenesis; peptidoglycan biosynthesis. Its function is as follows. Cell wall formation. Catalyzes the addition of glutamate to the nucleotide precursor UDP-N-acetylmuramoyl-L-alanine (UMA). This chain is UDP-N-acetylmuramoylalanine--D-glutamate ligase, found in Desulfotalea psychrophila (strain LSv54 / DSM 12343).